The following is a 458-amino-acid chain: ATP synthase subunit beta (458 aa).

148–155 contributes to the ATP binding site; that stretch reads GGAGVGKT.

This sequence belongs to the ATPase alpha/beta chains family. As to quaternary structure, F-type ATPases have 2 components, CF(1) - the catalytic core - and CF(0) - the membrane proton channel. CF(1) has five subunits: alpha(3), beta(3), gamma(1), delta(1), epsilon(1). CF(0) has three main subunits: a(1), b(2) and c(9-12). The alpha and beta chains form an alternating ring which encloses part of the gamma chain. CF(1) is attached to CF(0) by a central stalk formed by the gamma and epsilon chains, while a peripheral stalk is formed by the delta and b chains.

It localises to the cell inner membrane. It carries out the reaction ATP + H2O + 4 H(+)(in) = ADP + phosphate + 5 H(+)(out). Produces ATP from ADP in the presence of a proton gradient across the membrane. The catalytic sites are hosted primarily by the beta subunits. The chain is ATP synthase subunit beta from Francisella philomiragia subsp. philomiragia (strain ATCC 25017 / CCUG 19701 / FSC 153 / O#319-036).